The following is a 212-amino-acid chain: External core antigen (212 aa).

The N-terminal stretch at Met-1–Ala-19 is a signal peptide. Positions Gly-25–Leu-27 are HBEAG. Residues Asn-165 to Cys-212 are disordered. Over residues Val-178–Ser-205 the composition is skewed to basic residues. The stretch at Ser-184–Pro-190 is one 1; half-length repeat. Residues Ser-184–Gln-206 are 3 X 8 AA repeats of S-P-R-R-R-R-S-Q. Positions Ser-184–Cys-212 are excised as a propeptide. 2 repeat units span residues Ser-191–Gln-198 and Ser-199–Gln-206.

The protein belongs to the orthohepadnavirus precore antigen family. As to quaternary structure, homodimerizes. Post-translationally, phosphorylated. Cleaved by host furin.

It localises to the secreted. Its subcellular location is the host nucleus. In terms of biological role, may regulate immune response to the intracellular capsid in acting as a T-cell tolerogen, by having an immunoregulatory effect which prevents destruction of infected cells by cytotoxic T-cells. This immune regulation may predispose to chronicity during perinatal infections and prevent severe liver injury during adult infections. This chain is External core antigen, found in Hepatitis B virus genotype B2 (isolate Indonesia/pIDW420/1988) (HBV-B).